A 483-amino-acid polypeptide reads, in one-letter code: Probable ATP-dependent RNA helicase DDX49 (483 aa).

The Q motif signature appears at 2 to 30 (AGFAELGLSSWLVEQCRQLGLKQPTPVQL). The 175-residue stretch at 33–207 (IPAILEGRDC…GLATNQPFFW (175 aa)) folds into the Helicase ATP-binding domain. 46–53 (AKTGSGKT) contacts ATP. Positions 152–155 (DEAD) match the DEAD box motif. Residues 218-382 (QLDQRYLLVP…EFSVEEAEVL (165 aa)) enclose the Helicase C-terminal domain. The disordered stretch occupies residues 444–483 (KEKVEETLKRQKAGRAGHKGRPPRTPSGSHSGPVPSQGLV). The span at 453–465 (RQKAGRAGHKGRP) shows a compositional bias: basic residues.

The protein belongs to the DEAD box helicase family. DDX49/DBP8 subfamily.

It localises to the nucleus. It is found in the nucleolus. The catalysed reaction is ATP + H2O = ADP + phosphate + H(+). In terms of biological role, ATP-dependent RNA helicase that plays a role in various aspects of RNA metabolism including the regulation of mRNA export and the levels of pre-ribosomal RNA. Regulates the stability and synthesis of pre-ribosomal RNA and thereby regulates cell proliferation. Also possesses antiviral activity by recognizing gammaherpesvirus transcripts in the context of lytic reactivation. This is Probable ATP-dependent RNA helicase DDX49 (DDX49) from Homo sapiens (Human).